A 593-amino-acid chain; its full sequence is Probable ubiquitin carboxyl-terminal hydrolase 4 (593 aa).

A USP domain is found at 227 to 573 (IGLTNLGNTC…SSYILFYKRS (347 aa)). Residue cysteine 236 is the Nucleophile of the active site. Residues serine 338 and serine 343 each carry the phosphoserine modification. Histidine 530 serves as the catalytic Proton acceptor.

It belongs to the peptidase C19 family. Interacts with sfp47.

The protein resides in the cytoplasm. Its subcellular location is the endosome. It carries out the reaction Thiol-dependent hydrolysis of ester, thioester, amide, peptide and isopeptide bonds formed by the C-terminal Gly of ubiquitin (a 76-residue protein attached to proteins as an intracellular targeting signal).. Its function is as follows. Has an ATP-independent isopeptidase activity, cleaving at the C-terminus of the ubiquitin moiety. Acts late in the proteolytic pathway in conjunction with the 26S proteasome. Plays a role in avoiding DNA overreplication. This Schizosaccharomyces pombe (strain 972 / ATCC 24843) (Fission yeast) protein is Probable ubiquitin carboxyl-terminal hydrolase 4 (ubp4).